The chain runs to 516 residues: MTLDLDALDRALDALPNLFRGPGGVAGVVKDGQVVASRAWGYADLTRRRPMETGTRLPICSISKQFTCGALLDTLGDTAAYDARVAEFLPQFEGPLPTLRQLCDNQSGLRDYWALTVLQGAEAAQTFRREDALPLIARMKTGHFPPGTAYSYCNCNFRIVSEILESETGRALRDLYAERIFGPAGMRTAELTSDTRHPADEVVGYEGSDAVGFFPADNGIFWIGDAGISASLQDMLAYESWIDATRNDENSIYRRISVPPAYVCGTPASYGFGLSHETVAGVKVTGHGGALRGFRAQRFHAADERLSVVVIFNHEASAHAAASSLLAAALGHEAPKGARPEGWAGQWLDPESGLLLRVGEDAEGLTLRFATGPDRLTAGEDGVPRGAGVSLAREGAMLVMNRTSDNLTVRAEPLPVVAVADAGEIAGRYHARELEADLVIEARDGGAYAGFEGLLGAGPMERLHPVGPDVWIVTTRRSMDAPAPGDWTLQVRREGGAVTGLRLGCWLARRIDYARV.

The active-site Nucleophile is serine 61. The active-site Proton donor/acceptor is the lysine 64. Residues 476 to 486 (RRSMDAPAPGD) are important for specificity. Aspartate 480 contributes to the substrate binding site.

Belongs to the peptidase S12 family. As to quaternary structure, homodimer.

The catalysed reaction is Release of an N-terminal D-amino acid from a peptide, Xaa-|-Yaa-, in which Xaa is preferably D-Ala, D-Ser or D-Thr. D-amino acid amides and methyl esters also are hydrolyzed, as is glycine amide.. Inhibited by beta-lactam compounds such as 6-aminopenicillic acid, 7-aminocephalosporanic acid, benzylpenicillin and ampicillin. Inhibited by p-chloromercuribenzoate. Hydrolyzes N-terminal residues in D-amino acid-containing peptides. The chain is D-aminopeptidase from Cereibacter sphaeroides (strain ATCC 17023 / DSM 158 / JCM 6121 / CCUG 31486 / LMG 2827 / NBRC 12203 / NCIMB 8253 / ATH 2.4.1.) (Rhodobacter sphaeroides).